We begin with the raw amino-acid sequence, 476 residues long: Major facilitator superfamily domain-containing protein 12 (476 aa).

An N-acetylmethionine modification is found at M1. Residues 1–25 lie on the Cytoplasmic side of the membrane; it reads MSPPSDDAGPGPPRTLSLAARLSFA. A helical transmembrane segment spans residues 26–46; it reads VGHFLNDLCAGMWFTYLLLFL. Residues 47–55 are Lumenal-facing; the sequence is HSVRGYSSR. Residues 56–76 form a helical membrane-spanning segment; the sequence is GAGLLLLLGQVADGLCTPLVG. Residues 77–94 lie on the Cytoplasmic side of the membrane; it reads YEADRASCVRCGPRKAWH. Residues 95–115 traverse the membrane as a helical segment; that stretch reads LAGTVCVLLSFPFIFSPCLGC. Over 116–121 the chain is Lumenal; that stretch reads GEATPE. A helical transmembrane segment spans residues 122–142; that stretch reads WAALLYYGPFIVVFQFGWAAT. At 143–167 the chain is on the cytoplasmic side; sequence QIAHLSLIPELVTSDHEKVELTALR. The helical transmembrane segment at 168 to 188 threads the bilayer; it reads YAFTVVANITVYGAAWLLLHL. Residues 189–213 are Lumenal-facing; that stretch reads QGSAHGEQDISVGDQLGVQDVPVFR. A helical transmembrane segment spans residues 214 to 234; the sequence is NLALLVVGVGAIFSLLFHLGT. The Cytoplasmic portion of the chain corresponds to 235-284; that stretch reads KEGHRSQHWGNEPNEHTPLVAPAAQPLLLWKHWLREPAFYQVGMLYMTTR. At T251 the chain carries Phosphothreonine. Residues 285-305 traverse the membrane as a helical segment; that stretch reads LIVNLSQTYIAMYLTYSLSLP. Residue K306 is a topological domain, lumenal. A helical membrane pass occupies residues 307 to 327; the sequence is KFIATIPLVMYLSGFFSSFLM. The Cytoplasmic portion of the chain corresponds to 328–343; that stretch reads KPVNRRIGRNMTYFTG. 2 helical membrane passes run 344 to 364 and 365 to 385; these read LLVILAFAAWVALADNLGVAV and YGAAVLLGAGCATILVTSLAM. The Cytoplasmic segment spans residues 386–398; that stretch reads TADLIGPHTHSGA. Residues 399–419 traverse the membrane as a helical segment; it reads FVYGAMSFSDKVANGLAVMAV. The Lumenal portion of the chain corresponds to 420-444; that stretch reads QSLHPCPSELCCGACISFYHWVMTA. Residues 445-465 traverse the membrane as a helical segment; that stretch reads VTGGVGVAAALALCSLLIWPI. The Cytoplasmic segment spans residues 466–476; that stretch reads RIRNRDPRDRP.

The protein belongs to the major facilitator superfamily. Phosphorylation at Thr-251 by MTOR via mTORC1 pathway promotes cysteine transport in lysosomes, thereby regulating lysosomal cysteine and cystine storage and redox homeostasis.

Its subcellular location is the melanosome membrane. The protein resides in the lysosome membrane. The catalysed reaction is L-cysteine(in) = L-cysteine(out). Its function is as follows. Transporter that mediates the import of cysteine into melanosomes, thereby regulating skin/hair pigmentation. In melanosomes, cysteine import is required both for normal levels of cystine, the oxidized dimer of cysteine, and provide cysteine for the production of the cysteinyldopas used in pheomelanin synthesis, thereby regulating skin/hair pigmentation. Also catalyzes import of cysteine into lysosomes in non-pigmented cells, regulating lysosomal cystine and cysteine storage, which is essnetial for redox homeostasis. The polypeptide is Major facilitator superfamily domain-containing protein 12 (Mus musculus (Mouse)).